Reading from the N-terminus, the 448-residue chain is Probable glycine dehydrogenase (decarboxylating) subunit 1 (448 aa).

This sequence belongs to the GcvP family. N-terminal subunit subfamily. As to quaternary structure, the glycine cleavage system is composed of four proteins: P, T, L and H. In this organism, the P 'protein' is a heterodimer of two subunits.

It catalyses the reaction N(6)-[(R)-lipoyl]-L-lysyl-[glycine-cleavage complex H protein] + glycine + H(+) = N(6)-[(R)-S(8)-aminomethyldihydrolipoyl]-L-lysyl-[glycine-cleavage complex H protein] + CO2. The glycine cleavage system catalyzes the degradation of glycine. The P protein binds the alpha-amino group of glycine through its pyridoxal phosphate cofactor; CO(2) is released and the remaining methylamine moiety is then transferred to the lipoamide cofactor of the H protein. The protein is Probable glycine dehydrogenase (decarboxylating) subunit 1 of Listeria welshimeri serovar 6b (strain ATCC 35897 / DSM 20650 / CCUG 15529 / CIP 8149 / NCTC 11857 / SLCC 5334 / V8).